Here is a 404-residue protein sequence, read N- to C-terminus: Putative CBL-interacting protein kinase 27 (404 aa).

The Protein kinase domain occupies 11 to 266 (YEMGRVLGHG…VAGLLETPWF (256 aa)). Residues 17–25 (LGHGNFGRV) and K40 each bind ATP. The Proton acceptor role is filled by D134. The segment at 152-181 (DFGLSALACHARPDGLLHTACGTPAYVAPE) is activation loop. Residues 294 to 321 (DKDEPPEVLNAFHLISLSEGFDLSPLFE) enclose the NAF domain. Residues 335–356 (AGGTRFATREAASGVVARLEAL) form a PPI region.

This sequence belongs to the protein kinase superfamily. CAMK Ser/Thr protein kinase family. SNF1 subfamily. It depends on Mn(2+) as a cofactor.

It carries out the reaction L-seryl-[protein] + ATP = O-phospho-L-seryl-[protein] + ADP + H(+). The catalysed reaction is L-threonyl-[protein] + ATP = O-phospho-L-threonyl-[protein] + ADP + H(+). Its function is as follows. CIPK serine-threonine protein kinases interact with CBL proteins. Binding of a CBL protein to the regulatory NAF domain of CIPK protein lead to the activation of the kinase in a calcium-dependent manner. This Oryza sativa subsp. japonica (Rice) protein is Putative CBL-interacting protein kinase 27 (CIPK27).